Here is a 387-residue protein sequence, read N- to C-terminus: 3-ketoacyl-CoA thiolase (387 aa).

C91 functions as the Acyl-thioester intermediate in the catalytic mechanism. Active-site proton acceptor residues include H343 and C373.

The protein belongs to the thiolase-like superfamily. Thiolase family. In terms of assembly, heterotetramer of two alpha chains (FadB) and two beta chains (FadA).

Its subcellular location is the cytoplasm. It catalyses the reaction an acyl-CoA + acetyl-CoA = a 3-oxoacyl-CoA + CoA. Its pathway is lipid metabolism; fatty acid beta-oxidation. Catalyzes the final step of fatty acid oxidation in which acetyl-CoA is released and the CoA ester of a fatty acid two carbons shorter is formed. The chain is 3-ketoacyl-CoA thiolase from Vibrio cholerae serotype O1 (strain ATCC 39315 / El Tor Inaba N16961).